A 187-amino-acid polypeptide reads, in one-letter code: Pterin-4-alpha-carbinolamine dehydratase 2, mitochondrial (187 aa).

The N-terminal 33 residues, 1-33 (MSRLLLPKLFSISRTQVPAASLFNNLYRRHKRF), are a transit peptide targeting the mitochondrion.

Belongs to the pterin-4-alpha-carbinolamine dehydratase family.

Its subcellular location is the mitochondrion. It catalyses the reaction (4aS,6R)-4a-hydroxy-L-erythro-5,6,7,8-tetrahydrobiopterin = (6R)-L-erythro-6,7-dihydrobiopterin + H2O. Functionally, involved in tetrahydrobiopterin biosynthesis. Possesses pterin-4-alpha-carbinolamine dehydratase activity when expressed in a bacterial heterolgous system. The sequence is that of Pterin-4-alpha-carbinolamine dehydratase 2, mitochondrial from Arabidopsis thaliana (Mouse-ear cress).